Reading from the N-terminus, the 391-residue chain is tRNA-specific 2-thiouridylase MnmA (391 aa).

ATP is bound by residues 20-27 (AMSGGVDS) and L46. Residue C114 is the Nucleophile of the active site. A disulfide bridge links C114 with C210. G138 contributes to the ATP binding site. Residues 160 to 162 (RDQ) are interaction with tRNA. C210 serves as the catalytic Cysteine persulfide intermediate.

This sequence belongs to the MnmA/TRMU family.

The protein localises to the cytoplasm. The catalysed reaction is S-sulfanyl-L-cysteinyl-[protein] + uridine(34) in tRNA + AH2 + ATP = 2-thiouridine(34) in tRNA + L-cysteinyl-[protein] + A + AMP + diphosphate + H(+). Its function is as follows. Catalyzes the 2-thiolation of uridine at the wobble position (U34) of tRNA, leading to the formation of s(2)U34. The chain is tRNA-specific 2-thiouridylase MnmA from Bartonella bacilliformis (strain ATCC 35685 / KC583 / Herrer 020/F12,63).